Here is a 265-residue protein sequence, read N- to C-terminus: Transcription factor LBX1 (265 aa).

Positions 1-20 are enriched in basic and acidic residues; it reads MTSKDEAKSSSVEERRRHAL. Positions 1–33 are disordered; that stretch reads MTSKDEAKSSSVEERRRHALDLLPPPANSNKPL. Residues 125-184 constitute a DNA-binding region (homeobox); sequence RRKSRTAFTNHQIYELEKRFLYQKYLSPADRDQIAQQLGLTNAQVITWFQNRRAKLKRDL. The interval 212–265 is disordered; the sequence is EEETNSVRDDSRSRSPQLGLSGHMPLSPSSPLTEQHTSKECSEDEEDVEIDVDD. The span at 253–265 shows a compositional bias: acidic residues; that stretch reads SEDEEDVEIDVDD.

It is found in the nucleus. Its function is as follows. Transcription factor that controls hypaxial muscle development by down-regulating myod1 and cdkn1b/p27, thereby allowing myoblasts to proliferate before the onset of terminal differentiation. This chain is Transcription factor LBX1, found in Xenopus tropicalis (Western clawed frog).